We begin with the raw amino-acid sequence, 330 residues long: uncharacterized protein (330 aa).

A helical membrane pass occupies residues 2–22; it reads IKPIYLIIIGTVICLVILYYF. 4 N-linked (GlcNAc...) asparagine; by host glycosylation sites follow: asparagine 72, asparagine 94, asparagine 234, and asparagine 315.

The protein localises to the membrane. This is an uncharacterized protein from Acanthamoeba polyphaga mimivirus (APMV).